The primary structure comprises 475 residues: Bifunctional purple acid phosphatase 26 (475 aa).

Residues 1 to 30 form the signal peptide; sequence MNHLVIISVFLSSVLLLYRGESGITSSFIR. Asn-103 carries N-linked (GlcNAc...) asparagine glycosylation. Fe cation-binding residues include Asp-162, Asp-189, and Tyr-192. Asp-189 contributes to the Zn(2+) binding site. Residues Asn-227 and His-312 each coordinate Zn(2+). A substrate-binding site is contributed by Asn-227. Catalysis depends on His-322, which acts as the Proton donor. Residue His-349 coordinates Zn(2+). 349–351 contacts substrate; it reads HVH. His-351 is a binding site for Fe cation. Residues Asn-365 and Asn-422 are each glycosylated (N-linked (GlcNAc...) asparagine).

It belongs to the metallophosphoesterase superfamily. Purple acid phosphatase family. As to quaternary structure, homodimer. Fe cation serves as cofactor. Zn(2+) is required as a cofactor. Glycosylated. In terms of tissue distribution, expressed in roots, stems, leaves, flowers and siliques.

The protein resides in the vacuole. The enzyme catalyses a phosphate monoester + H2O = an alcohol + phosphate. It catalyses the reaction 2 a phenolic donor + H2O2 = 2 a phenolic radical donor + 2 H2O. Its activity is regulated as follows. Activated by Mg(2+), Co(2+), Mn(2+) and Ba(2+). Inhibited by Fe(2+), Cu(2+), Zn(2+), NaF, molybdate, arsenate, vanadate and inorganic phosphate. No effect of tartrate, Asp, Gln, glutathione, Asn, ascorbic acid and phosphite. Its function is as follows. Metallo-phosphoesterase involved in phosphate metabolism. Acid phosphatase activity with phosphoenolpyruvate, inorganic pyrophosphate, phenyl-phosphate and p-nitrophenyl-phosphate as the most effective substrates. No activity with phytic acid, phosphocholine or bis-p-nitrophenyl-phosphate. Has a peroxidase activity at alkaline pH. This chain is Bifunctional purple acid phosphatase 26 (PAP26), found in Arabidopsis thaliana (Mouse-ear cress).